A 396-amino-acid polypeptide reads, in one-letter code: Elongation factor Tu 2 (396 aa).

Residues 10-206 (KPHVNVGTIG…ALDTYIPTPK (197 aa)) form the tr-type G domain. A G1 region spans residues 19 to 26 (GHVDHGKT). 19-26 (GHVDHGKT) contributes to the GTP binding site. Thr-26 serves as a coordination point for Mg(2+). The G2 stretch occupies residues 60 to 64 (GITIS). Residues 81–84 (DCPG) are G3. Residues 81–85 (DCPGH) and 136–139 (NKAD) contribute to the GTP site. The interval 136–139 (NKAD) is G4. The interval 174–176 (SAL) is G5.

Belongs to the TRAFAC class translation factor GTPase superfamily. Classic translation factor GTPase family. EF-Tu/EF-1A subfamily. In terms of assembly, monomer.

It is found in the cytoplasm. The enzyme catalyses GTP + H2O = GDP + phosphate + H(+). Functionally, GTP hydrolase that promotes the GTP-dependent binding of aminoacyl-tRNA to the A-site of ribosomes during protein biosynthesis. The chain is Elongation factor Tu 2 from Ruthia magnifica subsp. Calyptogena magnifica.